The chain runs to 465 residues: Innexin-11 (465 aa).

Helical transmembrane passes span 29–49, 105–125, 195–215, and 286–306; these read LMTP…QFGG, QWVP…SYLW, SGFI…NVFA, and IFVL…VSLV. The interval 433-465 is disordered; that stretch reads ISTSLMPDKDDIESSSTSSEEDQKRVSNVITNI.

This sequence belongs to the pannexin family.

The protein resides in the cell membrane. It is found in the cell junction. The protein localises to the gap junction. Functionally, structural component of the gap junctions. The sequence is that of Innexin-11 (inx-11) from Caenorhabditis elegans.